A 346-amino-acid chain; its full sequence is Heparan sulfate glucosamine 3-O-sulfotransferase 5 (346 aa).

Residues 1 to 12 (MLFKQQVWLRQK) are Cytoplasmic-facing. The helical; Signal-anchor for type II membrane protein transmembrane segment at 13–32 (LLVLGSLAVGSLLYLVARVG) threads the bilayer. At 33 to 346 (SLDRLQPICP…QITGRTLNWP (314 aa)) the chain is on the lumenal side. Residue N75 is glycosylated (N-linked (GlcNAc...) asparagine). A 3'-phosphoadenylyl sulfate-binding site is contributed by 100–104 (KGGTR). Substrate contacts are provided by residues 122–128 (EIHFFDN) and 155–158 (KSPA). N173 carries an N-linked (GlcNAc...) asparagine glycan. Residues R183 and S191 each contribute to the 3'-phosphoadenylyl sulfate site. An N-linked (GlcNAc...) asparagine glycan is attached at N204. 226–227 (YK) is a substrate binding site. A glycan (N-linked (GlcNAc...) asparagine) is linked at N287. Y293 contacts 3'-phosphoadenylyl sulfate. C294 and C304 are disulfide-bonded. Position 309-313 (309-313 (KGRIH)) interacts with 3'-phosphoadenylyl sulfate.

This sequence belongs to the sulfotransferase 1 family.

The protein localises to the golgi apparatus membrane. It carries out the reaction alpha-D-glucosaminyl-[heparan sulfate](n) + 3'-phosphoadenylyl sulfate = 3-sulfo-alpha-D-glucosaminyl-[heparan sulfate](n) + adenosine 3',5'-bisphosphate + H(+). Its function is as follows. Sulfotransferase that utilizes 3'-phospho-5'-adenylyl sulfate (PAPS) to catalyze the transfer of a sulfo group to position 3 of glucosamine residues in heparan. Catalyzes the rate limiting step in the biosynthesis of heparan sulfate (HSact). This modification is a crucial step in the biosynthesis of anticoagulant heparan sulfate as it completes the structure of the antithrombin pentasaccharide binding site. Also generates GlcUA-GlcNS or IdoUA-GlcNS and IdoUA2S-GlcNH2. This chain is Heparan sulfate glucosamine 3-O-sulfotransferase 5 (Hs3st5), found in Mus musculus (Mouse).